Reading from the N-terminus, the 534-residue chain is MKIAVEGCCHGELDKIYETIQFLEKKENTKVDLLLCCGDFQAVRNEGDMKCMAVPMKYRQMQTFYKYYSGEKKAPILTIFIGGNHEASNYLQELPYGGWVAPNIYYMGYAGVVKYRGVRIGGISGIFKSHDYRKGHFERPPYSKDTVRSAYHVRSIEVFKLKQLKEPMDIFLSHDWPRSIYHYGNKKQLLKKKDFFRQEVEDNTLGSPAASELLLHIQPSYWFSAHLHVKFAAFMQHQNNVGEIPKATKFLALDKCLPHREFLQIVDMEHDPSKPECLEYDLEWLAVLKATKDLLNITSKTWNMPENNGLHARWDFSMSEETKREVLDDLGHDIKIPCNFSVTTACYDPNNPQYKRMPTHIVNPQTTEFCARLGLVDLNVKVRQHEEEKEDFDMTEDNEADSIGSAEDPGEYSTDTSILSTSVNPDEITLEDDDEQEDEGIAEKLGEPSPEYTPDLSVNFSNIRVLPDSMAVSSDDATDSTNDELDRSESSQTEGEGKQSNRPLKRMSNENGSGGVKIKRRNQAIYQAKDDEDE.

The a divalent metal cation site is built by cysteine 8, histidine 10, aspartate 39, and asparagine 84. Positions 124 to 154 (SGIFKSHDYRKGHFERPPYSKDTVRSAYHVR) are lariat recognition loop. Histidine 174, histidine 226, and histidine 228 together coordinate a divalent metal cation. Disordered stretches follow at residues 386–439 (EEEK…QEDE) and 469–534 (SMAV…DEDE). Positions 388–400 (EKEDFDMTEDNEA) are enriched in acidic residues. The span at 413 to 424 (STDTSILSTSVN) shows a compositional bias: polar residues. Over residues 428-439 (ITLEDDDEQEDE) the composition is skewed to acidic residues. Basic and acidic residues predominate over residues 484 to 499 (ELDRSESSQTEGEGKQ).

It belongs to the lariat debranching enzyme family. The cofactor is Fe(2+). It depends on Zn(2+) as a cofactor. Requires Mn(2+) as cofactor.

Its subcellular location is the nucleus. With respect to regulation, active in presence of diverse metals including Fe(2+), Zn(2+), Mn(2+). Also activated by Ca(2+). Binds two metal cations in two adjacent alpha and beta metal-binding pockets. In terms of biological role, cleaves the 2'-5' phosphodiester linkage at the branch point of excised lariat intron RNA and converts them into linear molecules that can be subsequently degraded, thereby facilitating ribonucleotide turnover. Linked to its role in pre-mRNA processing mechanism, may also participate in retrovirus replication and have an antiviral cell-intrinsic defense function. This Xenopus laevis (African clawed frog) protein is Lariat debranching enzyme A (dbr1-a).